Reading from the N-terminus, the 145-residue chain is Angiogenin-3 (145 aa).

The N-terminal stretch at 1–24 (MVMSPGSLLLVFLLSLDVIPPTLA) is a signal peptide. Glutamine 25 carries the pyrrolidone carboxylic acid modification. Histidine 37 (proton acceptor) is an active-site residue. Cystine bridges form between cysteine 50-cysteine 104, cysteine 63-cysteine 115, and cysteine 81-cysteine 130. Residues 55–59 (KKRKL) carry the Nucleolar localization signal motif. Residues glutamate 65 and histidine 106 each coordinate Zn(2+). The active-site Proton donor is histidine 137.

Belongs to the pancreatic ribonuclease family.

The protein resides in the cytoplasmic vesicle. It localises to the secretory vesicle lumen. It is found in the secreted. The protein localises to the nucleus. Its subcellular location is the nucleolus. With respect to regulation, divalent metal ions, such as Cu2+ and Zn2+, may inhibit the ribonucleolytic activity. Functionally, has low ribonuclease activity (in vitro). In Mus musculus (Mouse), this protein is Angiogenin-3 (Ang3).